The primary structure comprises 510 residues: Beta-glucosidase 12 (510 aa).

The signal sequence occupies residues 1-24 (MAAAGAMPGGLLLTFLLLAVVASG). Q53 is a binding site for a beta-D-glucoside. Residue N122 is glycosylated (N-linked (GlcNAc...) asparagine). Residues H157 and 202–203 (NE) contribute to the a beta-D-glucoside site. E203 serves as the catalytic Proton donor. 2 cysteine pairs are disulfide-bonded: C208/C243 and C222/C230. A glycan (N-linked (GlcNAc...) asparagine) is linked at N229. Y346 serves as a coordination point for a beta-D-glucoside. Residues N361 and N371 are each glycosylated (N-linked (GlcNAc...) asparagine). E417 contributes to the a beta-D-glucoside binding site. E417 serves as the catalytic Nucleophile. The N-linked (GlcNAc...) asparagine glycan is linked to N425. Residues W466, 473-474 (EW), and F482 contribute to the a beta-D-glucoside site.

Belongs to the glycosyl hydrolase 1 family.

The protein resides in the secreted. The enzyme catalyses Hydrolysis of terminal, non-reducing beta-D-glucosyl residues with release of beta-D-glucose.. In terms of biological role, hydrolyzes p-nitrophenyl beta-D-glucoside, p-nitrophenyl beta-D-galactoside, p-nitrophenyl beta-D-xyloside, p-nitrophenyl beta-D-fucoside, p-nitrophenyl beta-L-arabinoside, cello-oligosaccharides and laminaribiose. The chain is Beta-glucosidase 12 from Oryza sativa subsp. indica (Rice).